The sequence spans 157 residues: Acetyltransferase PseH (157 aa).

In terms of domain architecture, N-acetyltransferase spans 5-152 (KNFAELNSQE…YYVCLKQSHC (148 aa)).

Its function is as follows. Catalyzes the third step in the biosynthesis of pseudaminic acid, a sialic-acid-like sugar that is used to modify flagellin. Mediates N-4 acetylation of UDP-4-amino-4,6-dideoxy-beta-L-AltNAc to form UDP-2,4-diacetamido-2,4,6-trideoxy-beta-L-altropyranose. This Campylobacter jejuni subsp. jejuni serotype O:2 (strain ATCC 700819 / NCTC 11168) protein is Acetyltransferase PseH (pseH).